A 494-amino-acid polypeptide reads, in one-letter code: Putative NAD kinase 3 (494 aa).

Belongs to the NAD kinase family.

The enzyme catalyses NAD(+) + ATP = ADP + NADP(+) + H(+). The polypeptide is Putative NAD kinase 3 (Oryza sativa subsp. japonica (Rice)).